The following is a 308-amino-acid chain: Pantothenate kinase (308 aa).

Position 93–100 (93–100) interacts with ATP; that stretch reads GSVAVGKS.

This sequence belongs to the prokaryotic pantothenate kinase family.

Its subcellular location is the cytoplasm. The enzyme catalyses (R)-pantothenate + ATP = (R)-4'-phosphopantothenate + ADP + H(+). Its pathway is cofactor biosynthesis; coenzyme A biosynthesis; CoA from (R)-pantothenate: step 1/5. The chain is Pantothenate kinase from Corynebacterium diphtheriae (strain ATCC 700971 / NCTC 13129 / Biotype gravis).